A 199-amino-acid chain; its full sequence is MMAAKKRVTAAKDKWKLKQWYIIYAPDFFGGVEVGLTPADDPEKVMNRVVEVTLKDITGDFTKGHVKLYFQVYDVKGQNAYTKFKGMKLARSYIRSLVRRRTTRIDGIFNITTKDGYRLRVMAMAIAMRRIQTSQERAIRKIMQEIIYKKAEELNFKDFVLEAVNGKIAAEIAKEGKKIYPLKKAEIRKIKVLGEPEAA.

It belongs to the eukaryotic ribosomal protein eS1 family.

The polypeptide is Small ribosomal subunit protein eS1 (Pyrococcus horikoshii (strain ATCC 700860 / DSM 12428 / JCM 9974 / NBRC 100139 / OT-3)).